The following is a 140-amino-acid chain: Lysozyme B (140 aa).

The signal sequence occupies residues 1 to 18; it reads MKAFIVLVALALAAPALG. A C-type lysozyme domain is found at 19-140; the sequence is RTMDRCSLAR…GWLPSIDDCF (122 aa). 4 disulfide bridges follow: C24/C139, C45/C129, C80/C96, and C92/C110. Active-site residues include E50 and D68.

Belongs to the glycosyl hydrolase 22 family. Found in the midgut.

The enzyme catalyses Hydrolysis of (1-&gt;4)-beta-linkages between N-acetylmuramic acid and N-acetyl-D-glucosamine residues in a peptidoglycan and between N-acetyl-D-glucosamine residues in chitodextrins.. Functionally, unlikely to play an active role in the humoral immune defense. May have a function in the digestion of bacteria in the food. The protein is Lysozyme B (LysB) of Drosophila melanogaster (Fruit fly).